Reading from the N-terminus, the 324-residue chain is Putative GTPase PYRAB02490 (324 aa).

Residues 52-60 (GPPGAGKST), D194, and 229-231 (VAT) each bind GTP.

This sequence belongs to the SIMIBI class G3E GTPase family. ArgK/MeaB subfamily.

In terms of biological role, may have GTPase activity. May also bind and hydrolyze ATP. May function as chaperone. This Pyrococcus abyssi (strain GE5 / Orsay) protein is Putative GTPase PYRAB02490.